We begin with the raw amino-acid sequence, 308 residues long: Probable GTP 3',8-cyclase (308 aa).

In terms of domain architecture, Radical SAM core spans 4 to 224; it reads RFGRPLEDLR…QIRKKHFRPR (221 aa). GTP is bound at residue R13. C20, C24, and C27 together coordinate [4Fe-4S] cluster. K60 provides a ligand contact to GTP. An S-adenosyl-L-methionine-binding site is contributed by G64. T90 lines the GTP pocket. S114 contributes to the S-adenosyl-L-methionine binding site. Residue K151 participates in GTP binding. The [4Fe-4S] cluster site is built by C245 and C248. A GTP-binding site is contributed by 250–252; it reads RIR. Residue C262 coordinates [4Fe-4S] cluster.

Belongs to the radical SAM superfamily. MoaA family. It depends on [4Fe-4S] cluster as a cofactor.

It carries out the reaction GTP + AH2 + S-adenosyl-L-methionine = (8S)-3',8-cyclo-7,8-dihydroguanosine 5'-triphosphate + 5'-deoxyadenosine + L-methionine + A + H(+). The protein operates within cofactor biosynthesis; molybdopterin biosynthesis. Functionally, catalyzes the cyclization of GTP to (8S)-3',8-cyclo-7,8-dihydroguanosine 5'-triphosphate. The polypeptide is Probable GTP 3',8-cyclase (Saccharolobus islandicus (strain Y.N.15.51 / Yellowstone #2) (Sulfolobus islandicus)).